Here is a 946-residue protein sequence, read N- to C-terminus: DNA ligase 4 (946 aa).

Glu-295, Lys-297, Arg-302, Glu-355, Phe-397, Glu-457, Lys-462, Lys-479, and Lys-481 together coordinate ATP. Lys-297 serves as the catalytic N6-AMP-lysine intermediate. Residue Glu-355 participates in Mg(2+) binding. Glu-457 is a binding site for Mg(2+). BRCT domains follow at residues 688–787 (HRSD…PSHC) and 845–945 (VPHF…NYRL).

This sequence belongs to the ATP-dependent DNA ligase family. Mg(2+) serves as cofactor.

The protein resides in the nucleus. The catalysed reaction is ATP + (deoxyribonucleotide)n-3'-hydroxyl + 5'-phospho-(deoxyribonucleotide)m = (deoxyribonucleotide)n+m + AMP + diphosphate.. Functionally, DNA ligase involved in DNA non-homologous end joining (NHEJ); required for double-strand break (DSB) repair. The polypeptide is DNA ligase 4 (LIG4) (Candida glabrata (strain ATCC 2001 / BCRC 20586 / JCM 3761 / NBRC 0622 / NRRL Y-65 / CBS 138) (Yeast)).